The following is a 568-amino-acid chain: Urease subunit alpha (568 aa).

The Urease domain maps to 130 to 568 (GGIDTHIHFI…LPMAQRYFLF (439 aa)). Histidine 135, histidine 137, and lysine 218 together coordinate Ni(2+). N6-carboxylysine is present on lysine 218. A substrate-binding site is contributed by histidine 220. 2 residues coordinate Ni(2+): histidine 247 and histidine 273. Histidine 321 acts as the Proton donor in catalysis. Aspartate 361 provides a ligand contact to Ni(2+).

The protein belongs to the metallo-dependent hydrolases superfamily. Urease alpha subunit family. As to quaternary structure, heterotrimer of UreA (gamma), UreB (beta) and UreC (alpha) subunits. Three heterotrimers associate to form the active enzyme. The cofactor is Ni cation. Post-translationally, carboxylation allows a single lysine to coordinate two nickel ions.

The protein localises to the cytoplasm. It catalyses the reaction urea + 2 H2O + H(+) = hydrogencarbonate + 2 NH4(+). The protein operates within nitrogen metabolism; urea degradation; CO(2) and NH(3) from urea (urease route): step 1/1. The protein is Urease subunit alpha of Burkholderia orbicola (strain MC0-3).